Reading from the N-terminus, the 371-residue chain is Ligninase LG5 (371 aa).

A signal peptide spans 1 to 21 (MAFKKLLAVLTAALSLRAAQG). A propeptide spanning residues 22-27 (AAVEKR) is cleaved from the precursor. 4 disulfides stabilise this stretch: cysteine 30/cysteine 42, cysteine 41/cysteine 311, cysteine 61/cysteine 146, and cysteine 275/cysteine 344. Residue histidine 74 is the Proton acceptor of the active site. Residues aspartate 75, glycine 92, aspartate 94, and serine 96 each coordinate Ca(2+). Histidine 202 serves as a coordination point for heme b. The Ca(2+) site is built by serine 203, aspartate 220, threonine 222, isoleucine 225, and aspartate 227. A glycan (N-linked (GlcNAc...) asparagine) is linked at asparagine 283. The tract at residues 349 to 371 (FPTLSTLPGPATSVARIPPPPGA) is disordered.

Belongs to the peroxidase family. Ligninase subfamily. It depends on Ca(2+) as a cofactor. Requires heme b as cofactor.

The catalysed reaction is 1-(3,4-dimethoxyphenyl)-2-(2-methoxyphenoxy)propane-1,3-diol + H2O2 = 3,4-dimethoxybenzaldehyde + guaiacol + glycolaldehyde + H2O. The enzyme catalyses 2 (3,4-dimethoxyphenyl)methanol + H2O2 = 2 (3,4-dimethoxyphenyl)methanol radical + 2 H2O. It participates in secondary metabolite metabolism; lignin degradation. In terms of biological role, depolymerization of lignin. Catalyzes the C(alpha)-C(beta) cleavage of the propyl side chains of lignin. In Phanerodontia chrysosporium (White-rot fungus), this protein is Ligninase LG5 (GLG5).